Here is a 412-residue protein sequence, read N- to C-terminus: Imidazolonepropionase (412 aa).

Histidine 76 and histidine 78 together coordinate Fe(3+). Histidine 76 and histidine 78 together coordinate Zn(2+). 3 residues coordinate 4-imidazolone-5-propanoate: arginine 85, tyrosine 148, and histidine 181. Tyrosine 148 contributes to the N-formimidoyl-L-glutamate binding site. Histidine 242 is a Fe(3+) binding site. Histidine 242 is a Zn(2+) binding site. Glutamate 245 serves as a coordination point for 4-imidazolone-5-propanoate. Aspartate 317 is a binding site for Fe(3+). Residue aspartate 317 participates in Zn(2+) binding. Residues asparagine 319 and glycine 321 each contribute to the N-formimidoyl-L-glutamate site. Residue serine 322 coordinates 4-imidazolone-5-propanoate.

This sequence belongs to the metallo-dependent hydrolases superfamily. HutI family. It depends on Zn(2+) as a cofactor. Fe(3+) is required as a cofactor.

It localises to the cytoplasm. It catalyses the reaction 4-imidazolone-5-propanoate + H2O = N-formimidoyl-L-glutamate. It participates in amino-acid degradation; L-histidine degradation into L-glutamate; N-formimidoyl-L-glutamate from L-histidine: step 3/3. Catalyzes the hydrolytic cleavage of the carbon-nitrogen bond in imidazolone-5-propanoate to yield N-formimidoyl-L-glutamate. It is the third step in the universal histidine degradation pathway. This Staphylococcus aureus (strain MRSA252) protein is Imidazolonepropionase.